The chain runs to 322 residues: Ribosomal RNA small subunit methyltransferase H (322 aa).

S-adenosyl-L-methionine is bound by residues 40-42 (GGH), aspartate 60, phenylalanine 84, aspartate 106, and glutamine 113.

This sequence belongs to the methyltransferase superfamily. RsmH family.

It is found in the cytoplasm. The enzyme catalyses cytidine(1402) in 16S rRNA + S-adenosyl-L-methionine = N(4)-methylcytidine(1402) in 16S rRNA + S-adenosyl-L-homocysteine + H(+). Its function is as follows. Specifically methylates the N4 position of cytidine in position 1402 (C1402) of 16S rRNA. The protein is Ribosomal RNA small subunit methyltransferase H of Mannheimia succiniciproducens (strain KCTC 0769BP / MBEL55E).